Reading from the N-terminus, the 128-residue chain is Sulfurtransferase TusD (128 aa).

Residue C78 is the Cysteine persulfide intermediate of the active site.

It belongs to the DsrE/TusD family. In terms of assembly, heterohexamer, formed by a dimer of trimers. The hexameric TusBCD complex contains 2 copies each of TusB, TusC and TusD. The TusBCD complex interacts with TusE.

The protein resides in the cytoplasm. In terms of biological role, part of a sulfur-relay system required for 2-thiolation of 5-methylaminomethyl-2-thiouridine (mnm(5)s(2)U) at tRNA wobble positions. Accepts sulfur from TusA and transfers it in turn to TusE. The sequence is that of Sulfurtransferase TusD from Escherichia coli O17:K52:H18 (strain UMN026 / ExPEC).